Consider the following 798-residue polypeptide: Bromodomain-containing protein 2 (798 aa).

Residue methionine 1 is modified to N-acetylmethionine. The interval 1–21 is disordered; it reads MLQNVTPHKLPGEGNAGLLGL. Position 6 is a phosphothreonine (threonine 6). Phosphoserine is present on serine 36. The disordered stretch occupies residues 53–72; it reads LQLAPANPPPPEVSNPKKPG. The Bromo 1 domain maps to 73-179; that stretch reads RVTNQLQYLH…KIFLQKVASM (107 aa). A protein-binding residues include aspartate 111, tyrosine 154, asparagine 155, lysine 156, aspartate 159, and aspartate 160. Disordered stretches follow at residues 267–348, 454–645, and 736–798; these read PPAQ…LSEQ, DEPL…YDEK, and KRLQ…SDSG. The segment covering 284–297 has biased composition (low complexity); it reads TTTPTPTAILAPGS. A phosphoserine mark is found at serine 297, serine 300, and serine 304. Over residues 315 to 331 the composition is skewed to basic and acidic residues; the sequence is MRRESGRPIKPPRKDLP. The Bromo 2 domain maps to 343 to 452; that stretch reads GKLSEQLKHC…DVFEFRYAKM (110 aa). Over residues 480-512 the composition is skewed to acidic residues; it reads SSEESSSESSSEEEEEEEEDEDEEESESSDSEE. The segment covering 542 to 564 has biased composition (basic residues); that stretch reads KPKRKREKKEKKKKRKAEKHRGR. A Nuclear localization signal motif is present at residues 553-557; sequence KKKRK. The region spanning 630 to 712 is the NET domain; sequence DSEEEEESRP…SCLRKKPRKP (83 aa). Serine 631 is subject to Phosphoserine. Positions 772-792 are enriched in low complexity; it reads SASSSSSDSSSSSSSSSSSDT.

Belongs to the BET family. In terms of assembly, homodimer. Interacts with E2F1. Interacts with (acetylated) STAT3; promoting STAT3 recruitment to chromatin. Interacts with CTCF; promoting BRD2 recruitment to chromatin. Predominantly expressed in the testis, followed by ovary, placenta, embryo and to a lower extent in somatic tissues.

The protein resides in the nucleus. It localises to the chromosome. Its function is as follows. Chromatin reader protein that specifically recognizes and binds histone H4 acetylated at 'Lys-5' and 'Lys-12' (H4K5ac and H4K12ac, respectively), thereby controlling gene expression and remodeling chromatin structures. Recruits transcription factors and coactivators to target gene sites, and activates RNA polymerase II machinery for transcriptional elongation. Plays a key role in genome compartmentalization via its association with CTCF and cohesin: recruited to chromatin by CTCF and promotes formation of topologically associating domains (TADs) via its ability to bind acetylated histones, contributing to CTCF boundary formation and enhancer insulation. Also recognizes and binds acetylated non-histone proteins, such as STAT3. Involved in inflammatory response by regulating differentiation of naive CD4(+) T-cells into T-helper Th17: recognizes and binds STAT3 acetylated at 'Lys-87', promoting STAT3 recruitment to chromatin. In addition to acetylated lysines, also recognizes and binds lysine residues on histones that are both methylated and acetylated on the same side chain to form N6-acetyl-N6-methyllysine (Kacme), an epigenetic mark of active chromatin associated with increased transcriptional initiation. Specifically binds histone H4 acetyl-methylated at 'Lys-5' and 'Lys-12' (H4K5acme and H4K12acme, respectively). This chain is Bromodomain-containing protein 2, found in Mus musculus (Mouse).